Consider the following 188-residue polypeptide: Pupal cuticle protein Edg-84A (188 aa).

The signal sequence occupies residues 1-17 (MLVKTALFVTLIGLAQA). Residues 19–67 (PLPAKSSGSEDTYDSHPQYSFNYDVQDPETGDVKSQSESRDGDVVHGQY) are disordered. Residues 24–41 (SSGSEDTYDSHPQYSFNY) are compositionally biased toward polar residues. A Chitin-binding type R&amp;R domain is found at 34–100 (HPQYSFNYDV…AVVRREPLSS (67 aa)). Basic and acidic residues predominate over residues 49 to 62 (GDVKSQSESRDGDV).

Imaginal (anterior) epidermis.

In terms of biological role, component of the cuticle of the pupa of fruit fly. In Drosophila melanogaster (Fruit fly), this protein is Pupal cuticle protein Edg-84A (Edg84A).